The primary structure comprises 346 residues: Sensor protein kinase GraS (346 aa).

Helical transmembrane passes span 15 to 35 (MNWI…SLID) and 43 to 63 (LFYI…LTYF). The Histidine kinase domain maps to 126–332 (EFVHDIKTPV…TVRLIFPLQN (207 aa)).

In terms of assembly, interacts with GraX.

The protein localises to the cell membrane. It carries out the reaction ATP + protein L-histidine = ADP + protein N-phospho-L-histidine.. Its function is as follows. Member of the two-component regulatory system GraR/GraS involved in resistance against cationic antimicrobial peptides (CAMPs). Functions as a sensor protein kinase which phosphorylates GraR through the auxiliary protein GraX. In turn, GraR up-regulates many genes such as adhesins, exoproteins, transporters, toxins, and proteins involved in cell wall synthesis. Down-regulates the expression of many genes involved in RNA and amino acid synthesis or glycolysis. The protein is Sensor protein kinase GraS (graS) of Staphylococcus aureus (strain bovine RF122 / ET3-1).